The primary structure comprises 290 residues: S-adenosylmethionine-dependent nucleotide dehydratase (290 aa).

In terms of domain architecture, Radical SAM core spans 6 to 226; the sequence is SGNNIIPSVN…VNRHSKNKFL (221 aa). 3 residues coordinate [4Fe-4S] cluster: Cys-22, Cys-26, and Cys-29.

The protein belongs to the radical SAM superfamily. Viperin family. Requires [4Fe-4S] cluster as cofactor.

The enzyme catalyses UTP + AH2 + S-adenosyl-L-methionine = 3'-deoxy-3',4'-didehydro-UTP + 5'-deoxyadenosine + L-methionine + A + H2O + H(+). Its function is as follows. Expression of pVip47 in E.coli (strain MG1655) confers resistance to phage P1; has no effect against T7. Catalyzes the conversion of uridine triphosphate (UTP) to 3'-deoxy-3',4'-didehydro-UTP (ddhUTP), probably via a SAM-dependent radical mechanism. The modified nucleotide represses transcription from T7 RNA polymerase-directed genes (possibly by acting as chain terminators), strongly suggesting these nucleotides block viral polymerase transcription. How this protein allows bacteria to resist viruses that do not encode their own RNA polymerase (such as lambda, P1) is unknown. In Flammeovirga pacifica, this protein is S-adenosylmethionine-dependent nucleotide dehydratase.